The chain runs to 173 residues: Bifunctional protein PyrR (173 aa).

The PRPP-binding motif lies at 93–105 (IILVDDVLYTGRT).

This sequence belongs to the purine/pyrimidine phosphoribosyltransferase family. PyrR subfamily. In terms of assembly, homodimer and homohexamer; in equilibrium.

The enzyme catalyses UMP + diphosphate = 5-phospho-alpha-D-ribose 1-diphosphate + uracil. Its function is as follows. Regulates transcriptional attenuation of the pyrimidine nucleotide (pyr) operon by binding in a uridine-dependent manner to specific sites on pyr mRNA. This disrupts an antiterminator hairpin in the RNA and favors formation of a downstream transcription terminator, leading to a reduced expression of downstream genes. In terms of biological role, also displays a weak uracil phosphoribosyltransferase activity which is not physiologically significant. In Streptococcus equi subsp. zooepidemicus (strain MGCS10565), this protein is Bifunctional protein PyrR.